The following is a 3987-amino-acid chain: Hybrid PKS-NRPS synthetase buaA (3987 aa).

Positions 5 to 438 constitute a Ketosynthase family 3 (KS3) domain; the sequence is NEPIAIVGSG…GANAHAIVES (434 aa). Catalysis depends on for beta-ketoacyl synthase activity residues cysteine 176, histidine 315, and histidine 358. A malonyl-CoA:ACP transacylase (MAT) domain region spans residues 546–872; sequence VFTGQGAQWP…RNADDVESFS (327 aa). The segment at 939 to 1072 is N-terminal hotdog fold; that stretch reads HELLGVRVDS…GAVRLQLGAA (134 aa). Residues 939–1240 form the PKS/mFAS DH domain; that stretch reads HELLGVRVDS…VAPLVPVTQS (302 aa). The tract at residues 940-1238 is dehydratase (DH) domain; sequence ELLGVRVDSL…LQVAPLVPVT (299 aa). Histidine 970 functions as the Proton acceptor; for dehydratase activity in the catalytic mechanism. The segment at 1087-1240 is C-terminal hotdog fold; that stretch reads MNDVNIEHFY…VAPLVPVTQS (154 aa). Aspartate 1147 serves as the catalytic Proton donor; for dehydratase activity. A methyltransferase (MT) domain region spans residues 1399–1583; it reads YLANLVKQLS…TSTPSHDVFM (185 aa). A ketoreductase (KR) domain region spans residues 2113–2285; sequence TYLLVGLTGE…LPGSVMNLAG (173 aa). One can recognise a Carrier 1 domain in the interval 2397–2473; the sequence is RVLTNGLILT…AMVEDTMERM (77 aa). Serine 2433 is subject to O-(pantetheine 4'-phosphoryl)serine. The disordered stretch occupies residues 2489 to 2561; sequence AADRPSAPSD…PPPSSVMSED (73 aa). The span at 2514–2525 shows a compositional bias: basic and acidic residues; it reads HNSEEQESHAME. Low complexity predominate over residues 2532 to 2550; sequence STTSGGECSSTKESSSSEA. The condensation (C) domain stretch occupies residues 2582–3001; sequence MGYGSLQFFF…QLVKMCAYME (420 aa). Residues 3042–3448 form an adenylation (A) (KR) domain region; the sequence is LDVAQARPEA…GQLYYEGRIA (407 aa). In terms of domain architecture, Carrier 2 spans 3564-3644; the sequence is ADLSETELAL…AMALKIRNSQ (81 aa). Serine 3604 is modified (O-(pantetheine 4'-phosphoryl)serine). A reductase (R) domain region spans residues 3680 to 3916; sequence TVVLTGATGY…TGIAAAAVGA (237 aa).

In the C-terminal section; belongs to the NRP synthetase family.

Its pathway is mycotoxin biosynthesis. In terms of biological role, hybrid PKS-NRPS synthetase; part of the gene cluster that mediates the biosynthesis of burnettramic acids, an unusual class of bolaamphiphilic pyrrolizidinediones that display potent antibacterial, antifungal, and cytotoxic activities. The first step of the biosynthesis of burnettramic acids is the hydroxylation of proline by the proline hydroxylase buaE to generate 4-hydroxyproline. The PKS-NRPS buaA and trans-enoyl reductase buaC construct the highly reduced polyketide chain, and the condensation (C) domain of buaA then catalyzes the amide bond formation with the activated 4-hydroxyproline. This is followed by the R domain releasing the nascent polyketide-peptide directly via a Dieckmann condensation to afford a tetramic acid fused to the hydroxyproline, generating the bicyclic pyrrolidinedione moiety. The cytochrome P450 monooxygenases buaD and buaG are likely responsible for the multiple hydroxylations on the polyketide chain and its terminus, although in a heterologous context, buaD does not appear to be required. Therefore, while buaG may be a multifunctional cytochrome P450 monooxygenase, it cannot be ruled out that the two secondary alcohols on the polyketide chain could have an acetate origin. Finally, the glycosyltransferase buaB transfers beta-D-mannose to the aglycone burnettramic acid A to form burnettramic acid A. Burnettramic acid B is a minor cis-pyrrolizidine epimer of burnettramic acid A and it is likely that small amounts of it form naturally in acidic environments. The polypeptide is Hybrid PKS-NRPS synthetase buaA (Petromyces alliaceus (Aspergillus alliaceus)).